Reading from the N-terminus, the 114-residue chain is Cholecystokinin (114 aa).

The signal sequence occupies residues 1-20; sequence MNGGLCLCVLMAVLAAGTLA. A Sulfotyrosine modification is found at Y96. Phenylalanine amide is present on F102. Positions 106-114 are excised as a propeptide; sequence SAEEYEYTS. A sulfotyrosine mark is found at Y110 and Y112.

The protein belongs to the gastrin/cholecystokinin family. In terms of assembly, binds to CCK-A receptors in the pancreas and CCK-B receptors in the brain. Post-translationally, the precursor is cleaved by proteases to produce a number of active cholecystokinins. Brain contains CCK-octapeptide (CCK8) and several CCK-desoctapeptides; whereas pig gut contains intact CCK33, CCK39, and CCK58 as well as CCK-octapeptide and the CCK-desoctapeptides. Distribution differences are due to tissue-specific post-translational processing events. The precursor is cleaved by ACE, which removes the Gly-Arg-Arg peptide at the C-terminus, leading to mature hormone. Synthesized in both cerebral cortex and duodenal mucosa.

Its subcellular location is the secreted. This peptide hormone induces gall bladder contraction and the release of pancreatic enzymes in the gut. Its function in the brain is not clear. Binding to CCK-A receptors stimulates amylase release from the pancreas, binding to CCK-B receptors stimulates gastric acid secretion. The chain is Cholecystokinin (CCK) from Sus scrofa (Pig).